A 76-amino-acid polypeptide reads, in one-letter code: Tautomerase PptA (76 aa).

Pro-2 acts as the Proton acceptor; via imino nitrogen in catalysis.

It belongs to the 4-oxalocrotonate tautomerase family. PptA subfamily. Homodimer.

The protein resides in the cytoplasm. The protein is Tautomerase PptA of Pectobacterium atrosepticum (strain SCRI 1043 / ATCC BAA-672) (Erwinia carotovora subsp. atroseptica).